Here is a 105-residue protein sequence, read N- to C-terminus: Integration host factor (105 aa).

The short motif at 64 to 71 is the H2TH motif, binds DNA element; sequence LPKVGKVK. A lid, binds DNA region spans residues 82 to 94; that stretch reads APTRRLRGLGDRQ.

The protein belongs to the actinobacterial IHF (aIHF) family. In terms of assembly, binds DNA as a monomer. (Microbial infection) Forms a complex with L5 Int and attP DNA. The complex binds attB to form products.

The protein resides in the cytoplasm. Its subcellular location is the nucleoid. Functionally, a nucleoid-associated protein (NAP) that binds DNA without any sequence specificity. Compacts DNA. Binds along the whole chromosome in a dynamic manner, has equal affinity for the oriC site, attB and a randon 62% GC-rich sequence. Plays a role in transcription regulation. (Microbial infection) Stimulates temperate Mycobacterium phage L5 Int-mediated recombination in vitro using supercoiled attP (phage attachment site) DNA, linear attB DNA (bacterial attachment site) and L5 integrase (L5 Int or Int-L5, AC P22884). mIHF acts on L5 Int to stimulate formation of a specific intasome complex. mIHF probably stabilizes a sharp bend in the DNA during phage integration. The chain is Integration host factor from Mycolicibacterium smegmatis (strain ATCC 700084 / mc(2)155) (Mycobacterium smegmatis).